The chain runs to 130 residues: Large ribosomal subunit protein bL20 (130 aa).

Belongs to the bacterial ribosomal protein bL20 family.

Its function is as follows. Binds directly to 23S ribosomal RNA and is necessary for the in vitro assembly process of the 50S ribosomal subunit. It is not involved in the protein synthesizing functions of that subunit. The polypeptide is Large ribosomal subunit protein bL20 (Solibacter usitatus (strain Ellin6076)).